The chain runs to 725 residues: Portal protein (725 aa).

This sequence belongs to the p22likevirus portal protein family. As to quaternary structure, homododecamer. Interacts with the terminase large subunit; this interaction allows the packaging of viral DNA. Interacts (via C-terminus) with the head-to-tail adapter protein gp4; this interaction participates in the head completion. Interacts with the scaffolding protein; this interaction initiates procapsid assembly, thereby ensuring incorporation of only one portal ring per capsid. Interacts with the capsid protein.

The protein localises to the virion. Its function is as follows. Forms the portal vertex of the capsid. This portal plays critical roles in head assembly, genome packaging, neck/tail attachment, and genome ejection. Procapsid assembly may initiate with a nucleation complex composed of portal and scaffolding proteins. The portal protein multimerizes as a single ring-shaped homododecamer arranged around a central channel. Switches upon genome packaging from an asymmetrical conformation in the procapsid (PC-portal) to a symmetrical ring in the mature capsid (MV-portal). This change of conformation may serve as a signal for headful packaging. This chain is Portal protein (1), found in Salmonella typhimurium (Bacteriophage P22).